Here is a 466-residue protein sequence, read N- to C-terminus: 3-isopropylmalate dehydratase large subunit (466 aa).

3 residues coordinate [4Fe-4S] cluster: Cys-347, Cys-407, and Cys-410.

The protein belongs to the aconitase/IPM isomerase family. LeuC type 1 subfamily. As to quaternary structure, heterodimer of LeuC and LeuD. [4Fe-4S] cluster is required as a cofactor.

It catalyses the reaction (2R,3S)-3-isopropylmalate = (2S)-2-isopropylmalate. Its pathway is amino-acid biosynthesis; L-leucine biosynthesis; L-leucine from 3-methyl-2-oxobutanoate: step 2/4. Functionally, catalyzes the isomerization between 2-isopropylmalate and 3-isopropylmalate, via the formation of 2-isopropylmaleate. This Escherichia fergusonii (strain ATCC 35469 / DSM 13698 / CCUG 18766 / IAM 14443 / JCM 21226 / LMG 7866 / NBRC 102419 / NCTC 12128 / CDC 0568-73) protein is 3-isopropylmalate dehydratase large subunit.